Here is a 298-residue protein sequence, read N- to C-terminus: uncharacterized protein (298 aa).

Residue aspartate 119 is part of the active site.

It belongs to the pseudouridine synthase RluA family.

It carries out the reaction a uridine in RNA = a pseudouridine in RNA. This is an uncharacterized protein from Helicobacter pylori (strain ATCC 700392 / 26695) (Campylobacter pylori).